The chain runs to 243 residues: MSSPAEYYKSLPPISKAYGTLCFFTTVLVQLQILHPLFLYLDYPLVFKKFEIWRLLTSFFFLAPFSMKFGIRLLMIARYGVMLEKGAFDKRTADFLWMMIFGAISLLVLSIIPLFNSFFLGIPMVSMLLYVWSRENPNAQINIYGLVQLRSFYLPWAMLLLDVIFGSSLMPGLLGIMVGHLYYFFAVLHPLATGKSYLKTPKWVHKIVARFRIGMQANSPVRPPANGNSGSGVFRGRSYRLNQ.

The Cytoplasmic segment spans residues 1-20 (MSSPAEYYKSLPPISKAYGT). The helical transmembrane segment at 21–41 (LCFFTTVLVQLQILHPLFLYL) threads the bilayer. The Lumenal segment spans residues 42–55 (DYPLVFKKFEIWRL). A helical transmembrane segment spans residues 56–76 (LTSFFFLAPFSMKFGIRLLMI). The Cytoplasmic portion of the chain corresponds to 77–94 (ARYGVMLEKGAFDKRTAD). Residues 95-115 (FLWMMIFGAISLLVLSIIPLF) form a helical membrane-spanning segment. At 116 to 157 (NSFFLGIPMVSMLLYVWSRENPNAQINIYGLVQLRSFYLPWA) the chain is on the lumenal side. A helical membrane pass occupies residues 158–178 (MLLLDVIFGSSLMPGLLGIMV). The Cytoplasmic segment spans residues 179–243 (GHLYYFFAVL…FRGRSYRLNQ (65 aa)). A disordered region spans residues 219–243 (SPVRPPANGNSGSGVFRGRSYRLNQ).

It belongs to the derlin family. Expressed in roots, stalks, leaves, immature ears, embryo and endosperm.

The protein localises to the endoplasmic reticulum membrane. Functionally, may be involved in the degradation process of specific misfolded endoplasmic reticulum (ER) luminal proteins. The sequence is that of Derlin-1.1 (DER1.1) from Zea mays (Maize).